The sequence spans 565 residues: Adenine deaminase (565 aa).

Belongs to the metallo-dependent hydrolases superfamily. Adenine deaminase family. It depends on Mn(2+) as a cofactor.

The enzyme catalyses adenine + H2O + H(+) = hypoxanthine + NH4(+). The sequence is that of Adenine deaminase from Cereibacter sphaeroides (strain KD131 / KCTC 12085) (Rhodobacter sphaeroides).